Consider the following 347-residue polypeptide: GMP reductase (347 aa).

Residue 108–131 (ADFEKTKQILDLNPALNFVCIDVA) coordinates NADP(+). Residues Gly-181 and Gly-183 each coordinate K(+). The active-site Thioimidate intermediate is the Cys-186. 216 to 239 (IISDGGCTTPGDVAKAFGGGADFV) provides a ligand contact to NADP(+).

The protein belongs to the IMPDH/GMPR family. GuaC type 1 subfamily. Homotetramer.

The enzyme catalyses IMP + NH4(+) + NADP(+) = GMP + NADPH + 2 H(+). Catalyzes the irreversible NADPH-dependent deamination of GMP to IMP. It functions in the conversion of nucleobase, nucleoside and nucleotide derivatives of G to A nucleotides, and in maintaining the intracellular balance of A and G nucleotides. The polypeptide is GMP reductase (Escherichia coli O157:H7).